The chain runs to 118 residues: Large ribosomal subunit protein uL18 (118 aa).

The segment at 1 to 26 (MISKPDKNKIRQKRHRRVRGKLSGTA) is disordered. Residues 10-20 (IRQKRHRRVRG) show a composition bias toward basic residues.

Belongs to the universal ribosomal protein uL18 family. In terms of assembly, part of the 50S ribosomal subunit; part of the 5S rRNA/L5/L18/L25 subcomplex. Contacts the 5S and 23S rRNAs.

Its function is as follows. This is one of the proteins that bind and probably mediate the attachment of the 5S RNA into the large ribosomal subunit, where it forms part of the central protuberance. The polypeptide is Large ribosomal subunit protein uL18 (Streptococcus equi subsp. zooepidemicus (strain H70)).